We begin with the raw amino-acid sequence, 61 residues long: Putative neurotoxin-A (61 aa).

A signal peptide spans 1 to 19 (MKTVCGVFMVLLALTVLLA). Cystine bridges form between Cys31-Cys50, Cys36-Cys55, and Cys40-Cys57.

Belongs to the short scorpion toxin superfamily. As to expression, expressed by the venom gland.

Its subcellular location is the secreted. The sequence is that of Putative neurotoxin-A from Lychas mucronatus (Chinese swimming scorpion).